Consider the following 156-residue polypeptide: Arginine repressor (156 aa).

This sequence belongs to the ArgR family.

It localises to the cytoplasm. The protein operates within amino-acid biosynthesis; L-arginine biosynthesis [regulation]. In terms of biological role, regulates arginine biosynthesis genes. The chain is Arginine repressor from Escherichia coli O81 (strain ED1a).